Reading from the N-terminus, the 413-residue chain is BEN domain-containing protein 7 (413 aa).

Glycyl lysine isopeptide (Lys-Gly) (interchain with G-Cter in SUMO2) cross-links involve residues lysine 16, lysine 56, and lysine 85. Positions 78 to 88 (GKEGEKLKEEP) are enriched in basic and acidic residues. Disordered regions lie at residues 78–153 (GKEG…GELP) and 208–243 (RTAV…MEKK). Composition is skewed to polar residues over residues 99-111 (LNSS…SLHP) and 121-153 (PPQS…GELP). The span at 211–222 (VSRKRNKKKKVP) shows a compositional bias: basic residues. Over residues 223 to 232 (PKTVEPLTVK) the composition is skewed to low complexity. Residue lysine 243 forms a Glycyl lysine isopeptide (Lys-Gly) (interchain with G-Cter in SUMO2) linkage. The 106-residue stretch at 287 to 392 (GFDVFMPKSQ…IKLARRRLKR (106 aa)) folds into the BEN domain. Position 324 is a phosphothreonine (threonine 324). Phosphoserine is present on serine 328.

In Homo sapiens (Human), this protein is BEN domain-containing protein 7 (BEND7).